The following is a 1664-amino-acid chain: MYND-type zinc finger-containing chromatin reader Zmynd8 (1664 aa).

Low complexity-rich tracts occupy residues methionine 1–serine 16, serine 30–leucine 40, and serine 61–glycine 84. 3 disordered regions span residues methionine 1–glycine 84, serine 251–glutamate 271, and leucine 295–glutamate 323. Positions asparagine 258–glutamate 271 are enriched in basic and acidic residues. Positions alanine 296 to phenylalanine 308 are enriched in polar residues. Over residues serine 309–lysine 320 the composition is skewed to low complexity. Residues aspartate 343–isoleucine 389 form a PHD-type zinc finger. Zn(2+) contacts are provided by cysteine 346, cysteine 349, cysteine 358, cysteine 361, histidine 366, cysteine 369, cysteine 383, and cysteine 386. One can recognise a Bromo domain in the interval valine 401–isoleucine 504. 3 residues coordinate Zn(2+): cysteine 507, cysteine 510, and cysteine 525. The region spanning proline 528–glutamine 579 is the PWWP domain. Disordered regions lie at residues lysine 672–serine 693, glutamate 747–asparagine 815, lysine 857–glutamate 905, and threonine 919–serine 1139. A compositionally biased stretch (polar residues) spans threonine 676–lysine 690. Positions histidine 775–lysine 784 are enriched in basic residues. The span at glutamine 785–glycine 800 shows a compositional bias: basic and acidic residues. Residues isoleucine 874–glutamine 884 are compositionally biased toward pro residues. The span at proline 935–threonine 952 shows a compositional bias: polar residues. The segment covering alanine 953–alanine 962 has biased composition (low complexity). A compositionally biased stretch (pro residues) spans proline 1006 to proline 1019. Positions threonine 1037 to threonine 1053 are enriched in polar residues. Positions serine 1073–alanine 1097 are enriched in low complexity. Cysteine 1399, cysteine 1402, cysteine 1410, cysteine 1411, cysteine 1417, cysteine 1421, histidine 1429, and cysteine 1433 together coordinate Zn(2+). The MYND-type zinc finger occupies cysteine 1399–cysteine 1433. The interval valine 1613–asparagine 1648 is disordered. Over residues serine 1620 to asparagine 1648 the composition is skewed to polar residues.

Its subcellular location is the nucleus. It localises to the chromosome. In terms of biological role, chromatin reader that recognizes specific histone signatures to regulate transcription. Plays a role in neuronal development. The polypeptide is MYND-type zinc finger-containing chromatin reader Zmynd8 (Drosophila melanogaster (Fruit fly)).